The sequence spans 279 residues: Shikimate dehydrogenase (NADP(+)) (279 aa).

Shikimate is bound by residues serine 17 to serine 19 and threonine 64. The active-site Proton acceptor is lysine 68. The shikimate site is built by asparagine 89 and aspartate 105. Residues glycine 130–alanine 134 and leucine 218 contribute to the NADP(+) site. Tyrosine 220 lines the shikimate pocket. Glycine 242 lines the NADP(+) pocket.

This sequence belongs to the shikimate dehydrogenase family. As to quaternary structure, homodimer.

The catalysed reaction is shikimate + NADP(+) = 3-dehydroshikimate + NADPH + H(+). The protein operates within metabolic intermediate biosynthesis; chorismate biosynthesis; chorismate from D-erythrose 4-phosphate and phosphoenolpyruvate: step 4/7. Functionally, involved in the biosynthesis of the chorismate, which leads to the biosynthesis of aromatic amino acids. Catalyzes the reversible NADPH linked reduction of 3-dehydroshikimate (DHSA) to yield shikimate (SA). This chain is Shikimate dehydrogenase (NADP(+)), found in Methylococcus capsulatus (strain ATCC 33009 / NCIMB 11132 / Bath).